A 166-amino-acid polypeptide reads, in one-letter code: Regulatory protein RecX (166 aa).

This sequence belongs to the RecX family.

Its subcellular location is the cytoplasm. Its function is as follows. Modulates RecA activity. The sequence is that of Regulatory protein RecX from Escherichia coli O139:H28 (strain E24377A / ETEC).